Reading from the N-terminus, the 534-residue chain is MFS transporter fmqE (534 aa).

12 helical membrane-spanning segments follow: residues 48–68 (LLLF…VCAS), 109–129 (LWTS…GFLA), 136–156 (WTAV…VFSS), 169–189 (GAVV…VAPI), 194–214 (ALLQ…LGIV), 228–248 (IVFG…FLVP), 326–346 (AIGV…GLNV), 349–369 (VFDI…LGWL), 379–399 (LWLW…ALGF), 407–427 (LAIA…TVGV), 447–467 (VAFI…PYMY), and 478–498 (TGFV…FLVP).

This sequence belongs to the major facilitator superfamily. Sugar transporter (TC 2.A.1.1) family.

It localises to the cytoplasmic vesicle membrane. MFS transporter; part of the gene cluster that mediates the biosynthesis of the antitumor cytotoxic peptidyl alkaloids fumiquinazolines that confer a dual-usage capability to defend against phagocytes in the environment and animal hosts. Probably involved in fumiquinazolines metabolism and transport. The polypeptide is MFS transporter fmqE (Aspergillus fumigatus (strain ATCC MYA-4609 / CBS 101355 / FGSC A1100 / Af293) (Neosartorya fumigata)).